Reading from the N-terminus, the 1118-residue chain is Error-prone DNA polymerase (1118 aa).

Residues 1071-1118 (GPQPMGYAKEVGSDRRSRPEIGNAPARQDLATLSEEAEQVMPKGRNFQ) form a disordered region.

It belongs to the DNA polymerase type-C family. DnaE2 subfamily.

The protein resides in the cytoplasm. It catalyses the reaction DNA(n) + a 2'-deoxyribonucleoside 5'-triphosphate = DNA(n+1) + diphosphate. Its function is as follows. DNA polymerase involved in damage-induced mutagenesis and translesion synthesis (TLS). It is not the major replicative DNA polymerase. This is Error-prone DNA polymerase from Mesorhizobium japonicum (strain LMG 29417 / CECT 9101 / MAFF 303099) (Mesorhizobium loti (strain MAFF 303099)).